The chain runs to 351 residues: DNA polymerase IV (351 aa).

Positions 4–185 constitute a UmuC domain; sequence IIHVDMDCFF…LPLAKIPGVG (182 aa). D8 and D103 together coordinate Mg(2+). Residue E104 is part of the active site.

It belongs to the DNA polymerase type-Y family. In terms of assembly, monomer. Requires Mg(2+) as cofactor.

The protein localises to the cytoplasm. The catalysed reaction is DNA(n) + a 2'-deoxyribonucleoside 5'-triphosphate = DNA(n+1) + diphosphate. Poorly processive, error-prone DNA polymerase involved in untargeted mutagenesis. Copies undamaged DNA at stalled replication forks, which arise in vivo from mismatched or misaligned primer ends. These misaligned primers can be extended by PolIV. Exhibits no 3'-5' exonuclease (proofreading) activity. May be involved in translesional synthesis, in conjunction with the beta clamp from PolIII. The polypeptide is DNA polymerase IV (Shigella dysenteriae serotype 1 (strain Sd197)).